Consider the following 99-residue polypeptide: Integration host factor subunit alpha (99 aa).

Positions 51–71 (NFDLRDKNQRPGRNPKTGEDI) are disordered.

Belongs to the bacterial histone-like protein family. As to quaternary structure, heterodimer of an alpha and a beta chain.

Functionally, this protein is one of the two subunits of integration host factor, a specific DNA-binding protein that functions in genetic recombination as well as in transcriptional and translational control. The chain is Integration host factor subunit alpha (ihfA) from Dickeya dadantii (strain 3937) (Erwinia chrysanthemi (strain 3937)).